Consider the following 332-residue polypeptide: Beta-ketoacyl-[acyl-carrier-protein] synthase III (332 aa).

Residues cysteine 114 and histidine 255 contribute to the active site. Residues 256 to 260 are ACP-binding; the sequence is QANLR. Asparagine 285 is a catalytic residue.

It belongs to the thiolase-like superfamily. FabH family. As to quaternary structure, homodimer.

The protein resides in the cytoplasm. It carries out the reaction malonyl-[ACP] + acetyl-CoA + H(+) = 3-oxobutanoyl-[ACP] + CO2 + CoA. The protein operates within lipid metabolism; fatty acid biosynthesis. In terms of biological role, catalyzes the condensation reaction of fatty acid synthesis by the addition to an acyl acceptor of two carbons from malonyl-ACP. Catalyzes the first condensation reaction which initiates fatty acid synthesis and may therefore play a role in governing the total rate of fatty acid production. Possesses both acetoacetyl-ACP synthase and acetyl transacylase activities. Its substrate specificity determines the biosynthesis of branched-chain and/or straight-chain of fatty acids. This chain is Beta-ketoacyl-[acyl-carrier-protein] synthase III, found in Sulfurimonas denitrificans (strain ATCC 33889 / DSM 1251) (Thiomicrospira denitrificans (strain ATCC 33889 / DSM 1251)).